A 132-amino-acid chain; its full sequence is Large ribosomal subunit protein uL24 (132 aa).

Belongs to the universal ribosomal protein uL24 family. As to quaternary structure, part of the 50S ribosomal subunit.

Its function is as follows. One of two assembly initiator proteins, it binds directly to the 5'-end of the 23S rRNA, where it nucleates assembly of the 50S subunit. Functionally, located at the polypeptide exit tunnel on the outside of the subunit. This chain is Large ribosomal subunit protein uL24, found in Aeropyrum pernix (strain ATCC 700893 / DSM 11879 / JCM 9820 / NBRC 100138 / K1).